The primary structure comprises 491 residues: Rab5 GDP/GTP exchange factor (491 aa).

Residues 1–74 (MSLKSERRGI…EEEAFASSQS (74 aa)) form an interaction with ubiquitinated proteins region. The A20-type zinc finger occupies 13–47 (DQSELLCKKGCGYYGNPAWQGFCSKCWREEYHKAR). Cys-19, Cys-23, Cys-35, and Cys-38 together coordinate Zn(2+). Residues 66–85 (EEAFASSQSSQGAQSLTFSK) are disordered. The span at 69–84 (FASSQSSQGAQSLTFS) shows a compositional bias: low complexity. A phosphoserine mark is found at Ser-124 and Ser-132. An N6-acetyllysine mark is found at Lys-151 and Lys-170. One can recognise a VPS9 domain in the interval 232-375 (EKKDLAIQKR…IEKLDAQSLN (144 aa)). 3 positions are modified to phosphoserine: Ser-373, Ser-377, and Ser-390. Residues 407 to 448 (VKQMYKNLDLLSQLNERQERIMNEAKKLEKDLIDWTDGIAKE) are a coiled coil. Positions 462-491 (PPNQPLAAIDSENVENDKLPPPLQPQVYAG) are disordered.

As to quaternary structure, heterodimer with RABEP1. The heterodimer binds RAB4A and RAB5A that have been activated by GTP-binding. Binds TSC2, GGA1, GGA2, GGA3, AP1G1 and AP1G2. Interacts with RAB21, and with 100-fold lower affinity also with RAB22. Interacts with ubiquitinated EGFR. Interacts with RGS14; the interaction is GTP-dependent. In terms of processing, monoubiquitinated. Expressed in the white matter tracts of the cerebellum, the fimbria hippocampi and the corpus callosum.

It localises to the cytoplasm. It is found in the early endosome. Its subcellular location is the recycling endosome. Its function is as follows. Rab effector protein acting as linker between gamma-adaptin, RAB4A or RAB5A. Involved in endocytic membrane fusion and membrane trafficking of recycling endosomes. Stimulates nucleotide exchange on RAB5A. Can act as a ubiquitin ligase. The sequence is that of Rab5 GDP/GTP exchange factor (Rabgef1) from Mus musculus (Mouse).